Reading from the N-terminus, the 341-residue chain is Anthranilate phosphoribosyltransferase (341 aa).

Residues Gly79, 82 to 83, Thr87, 89 to 92, 107 to 115, and Ser119 contribute to the 5-phospho-alpha-D-ribose 1-diphosphate site; these read GD, NIST, and KHGNRAASS. Gly79 serves as a coordination point for anthranilate. Ser91 provides a ligand contact to Mg(2+). Residue Asn110 participates in anthranilate binding. Arg165 is an anthranilate binding site. Mg(2+)-binding residues include Asp224 and Glu225.

It belongs to the anthranilate phosphoribosyltransferase family. As to quaternary structure, homodimer. The cofactor is Mg(2+).

The catalysed reaction is N-(5-phospho-beta-D-ribosyl)anthranilate + diphosphate = 5-phospho-alpha-D-ribose 1-diphosphate + anthranilate. Its pathway is amino-acid biosynthesis; L-tryptophan biosynthesis; L-tryptophan from chorismate: step 2/5. Its function is as follows. Catalyzes the transfer of the phosphoribosyl group of 5-phosphorylribose-1-pyrophosphate (PRPP) to anthranilate to yield N-(5'-phosphoribosyl)-anthranilate (PRA). In Dehalococcoides mccartyi (strain ATCC BAA-2266 / KCTC 15142 / 195) (Dehalococcoides ethenogenes (strain 195)), this protein is Anthranilate phosphoribosyltransferase.